Reading from the N-terminus, the 373-residue chain is Transaldolase (373 aa).

Lysine 143 functions as the Schiff-base intermediate with substrate in the catalytic mechanism.

This sequence belongs to the transaldolase family. Type 2 subfamily.

The protein localises to the cytoplasm. The catalysed reaction is D-sedoheptulose 7-phosphate + D-glyceraldehyde 3-phosphate = D-erythrose 4-phosphate + beta-D-fructose 6-phosphate. It functions in the pathway carbohydrate degradation; pentose phosphate pathway; D-glyceraldehyde 3-phosphate and beta-D-fructose 6-phosphate from D-ribose 5-phosphate and D-xylulose 5-phosphate (non-oxidative stage): step 2/3. In terms of biological role, transaldolase is important for the balance of metabolites in the pentose-phosphate pathway. This chain is Transaldolase, found in Mycobacterium ulcerans (strain Agy99).